The sequence spans 100 residues: Ubiquinol-cytochrome-C reductase complex subunit IX, mitochondrial (100 aa).

Residues 1–30 constitute a mitochondrion transit peptide; that stretch reads MQTHVRRVALQALRPCLRAGLMAPKFPVRF. The chain crosses the membrane as a helical span at residues 66-86; that stretch reads LLMRLFFAFVAYVVAMKVFGA.

As to quaternary structure, plants bc1 complex contains 10 subunits; 3 respiratory subunits, 2 core proteins and 5 low-molecular weight proteins.

It localises to the mitochondrion inner membrane. In terms of biological role, this is a component of the ubiquinol-cytochrome c reductase complex (complex III or cytochrome b-c1 complex), which is part of the mitochondrial respiratory chain. This chain is Ubiquinol-cytochrome-C reductase complex subunit IX, mitochondrial, found in Euglena gracilis.